The sequence spans 207 residues: Guanylate kinase (207 aa).

Residues 4 to 184 form the Guanylate kinase-like domain; the sequence is GTLYIVSAPS…ALADLHTIIR (181 aa). 11 to 18 lines the ATP pocket; the sequence is APSGAGKS.

This sequence belongs to the guanylate kinase family.

Its subcellular location is the cytoplasm. The catalysed reaction is GMP + ATP = GDP + ADP. In terms of biological role, essential for recycling GMP and indirectly, cGMP. This Photorhabdus laumondii subsp. laumondii (strain DSM 15139 / CIP 105565 / TT01) (Photorhabdus luminescens subsp. laumondii) protein is Guanylate kinase.